The sequence spans 166 residues: Interferon gamma (166 aa).

An N-terminal signal peptide occupies residues 1 to 23; that stretch reads MKYTSYILAFQLCIVLGSLGCYC. Pyrrolidone carboxylic acid is present on Gln-24. Asn-48 is a glycosylation site (N-linked (GlcNAc...) asparagine). N-linked (GlcNAc...) asparagine; in dimeric form glycosylation is present at Asn-120. Positions 147–166 are disordered; sequence AKTGKRKRSQMLFRGRRASQ. A compositionally biased stretch (basic residues) spans 149 to 166; the sequence is TGKRKRSQMLFRGRRASQ. The propeptide occupies 162-166; the sequence is RRASQ.

The protein belongs to the type II (or gamma) interferon family. Homodimer. Interacts with IFNGR1 (via extracellular domain); this interaction promotes IFNGR1 dimerization. In terms of processing, proteolytic processing produces C-terminal heterogeneity, with proteins ending alternatively at Gly-150, Met-157 or Gly-161. In terms of tissue distribution, released primarily from activated T lymphocytes.

The protein localises to the secreted. Its function is as follows. Type II interferon produced by immune cells such as T-cells and NK cells that plays crucial roles in antimicrobial, antiviral, and antitumor responses by activating effector immune cells and enhancing antigen presentation. Primarily signals through the JAK-STAT pathway after interaction with its receptor IFNGR1 to affect gene regulation. Upon IFNG binding, IFNGR1 intracellular domain opens out to allow association of downstream signaling components JAK2, JAK1 and STAT1, leading to STAT1 activation, nuclear translocation and transcription of IFNG-regulated genes. Many of the induced genes are transcription factors such as IRF1 that are able to further drive regulation of a next wave of transcription. Plays a role in class I antigen presentation pathway by inducing a replacement of catalytic proteasome subunits with immunoproteasome subunits. In turn, increases the quantity, quality, and repertoire of peptides for class I MHC loading. Increases the efficiency of peptide generation also by inducing the expression of activator PA28 that associates with the proteasome and alters its proteolytic cleavage preference. Up-regulates as well MHC II complexes on the cell surface by promoting expression of several key molecules such as cathepsins B/CTSB, H/CTSH, and L/CTSL. Participates in the regulation of hematopoietic stem cells during development and under homeostatic conditions by affecting their development, quiescence, and differentiation. This is Interferon gamma (IFNG) from Homo sapiens (Human).